Here is a 332-residue protein sequence, read N- to C-terminus: tRNA dimethylallyltransferase (332 aa).

30–37 contacts ATP; it reads GPTAVGKT. Residue 32-37 coordinates substrate; sequence TAVGKT. The interval 57-60 is interaction with substrate tRNA; that stretch reads DSMQ.

The protein belongs to the IPP transferase family. Monomer. Mg(2+) is required as a cofactor.

It catalyses the reaction adenosine(37) in tRNA + dimethylallyl diphosphate = N(6)-dimethylallyladenosine(37) in tRNA + diphosphate. Its function is as follows. Catalyzes the transfer of a dimethylallyl group onto the adenine at position 37 in tRNAs that read codons beginning with uridine, leading to the formation of N6-(dimethylallyl)adenosine (i(6)A). In Natranaerobius thermophilus (strain ATCC BAA-1301 / DSM 18059 / JW/NM-WN-LF), this protein is tRNA dimethylallyltransferase.